A 441-amino-acid chain; its full sequence is Probable D-serine dehydratase (441 aa).

Lys117 carries the N6-(pyridoxal phosphate)lysine modification.

The protein belongs to the serine/threonine dehydratase family. DsdA subfamily. It depends on pyridoxal 5'-phosphate as a cofactor.

The enzyme catalyses D-serine = pyruvate + NH4(+). The protein is Probable D-serine dehydratase of Acinetobacter baylyi (strain ATCC 33305 / BD413 / ADP1).